A 77-amino-acid chain; its full sequence is Large ribosomal subunit protein eL14 (77 aa).

This sequence belongs to the eukaryotic ribosomal protein eL14 family.

This Methanococcus maripaludis (strain C7 / ATCC BAA-1331) protein is Large ribosomal subunit protein eL14.